The primary structure comprises 74 residues: Transcription attenuation protein MtrB (74 aa).

The protein belongs to the MtrB family. In terms of assembly, oligomer of 11 identical subunits arranged in doughnut-like structure.

Its function is as follows. Required for transcription attenuation control in the Trp operon. This trans-acting factor seems to recognize a 10 bases nucleotide sequence in the Trp leader transcript causing transcription termination. Binds the leader RNA only in presence of L-tryptophan. In Geobacillus sp. (strain WCH70), this protein is Transcription attenuation protein MtrB.